The primary structure comprises 388 residues: Formate-dependent phosphoribosylglycinamide formyltransferase (388 aa).

Residues 11–12 and glutamate 71 contribute to the N(1)-(5-phospho-beta-D-ribosyl)glycinamide site; that span reads EL. ATP-binding positions include arginine 103, lysine 144, 149–154, 184–187, and glutamate 192; these read SSGKGQ and EEFI. The 193-residue stretch at 108–300 folds into the ATP-grasp domain; the sequence is DLAAKELGLK…EFELHLRAVL (193 aa). Positions 257 and 270 each coordinate Mg(2+). N(1)-(5-phospho-beta-D-ribosyl)glycinamide contacts are provided by residues aspartate 277, lysine 349, and 356-357; that span reads RR.

The protein belongs to the PurK/PurT family. As to quaternary structure, homodimer.

The enzyme catalyses N(1)-(5-phospho-beta-D-ribosyl)glycinamide + formate + ATP = N(2)-formyl-N(1)-(5-phospho-beta-D-ribosyl)glycinamide + ADP + phosphate + H(+). Its pathway is purine metabolism; IMP biosynthesis via de novo pathway; N(2)-formyl-N(1)-(5-phospho-D-ribosyl)glycinamide from N(1)-(5-phospho-D-ribosyl)glycinamide (formate route): step 1/1. In terms of biological role, involved in the de novo purine biosynthesis. Catalyzes the transfer of formate to 5-phospho-ribosyl-glycinamide (GAR), producing 5-phospho-ribosyl-N-formylglycinamide (FGAR). Formate is provided by PurU via hydrolysis of 10-formyl-tetrahydrofolate. This chain is Formate-dependent phosphoribosylglycinamide formyltransferase, found in Bacteroides fragilis (strain ATCC 25285 / DSM 2151 / CCUG 4856 / JCM 11019 / LMG 10263 / NCTC 9343 / Onslow / VPI 2553 / EN-2).